The following is a 307-amino-acid chain: Methionyl-tRNA formyltransferase (307 aa).

109–112 contributes to the (6S)-5,6,7,8-tetrahydrofolate binding site; sequence SMLP.

The protein belongs to the Fmt family.

The catalysed reaction is L-methionyl-tRNA(fMet) + (6R)-10-formyltetrahydrofolate = N-formyl-L-methionyl-tRNA(fMet) + (6S)-5,6,7,8-tetrahydrofolate + H(+). In terms of biological role, attaches a formyl group to the free amino group of methionyl-tRNA(fMet). The formyl group appears to play a dual role in the initiator identity of N-formylmethionyl-tRNA by promoting its recognition by IF2 and preventing the misappropriation of this tRNA by the elongation apparatus. This is Methionyl-tRNA formyltransferase from Orientia tsutsugamushi (strain Boryong) (Rickettsia tsutsugamushi).